The chain runs to 330 residues: DNA-directed RNA polymerase subunit alpha (330 aa).

The segment at 1–225 (MSDLAIPTIS…KQFAALVSHN (225 aa)) is alpha N-terminal domain (alpha-NTD). The segment at 237 to 330 (VKYAIPEEKY…KKKNKGMDEA (94 aa)) is alpha C-terminal domain (alpha-CTD).

Belongs to the RNA polymerase alpha chain family. Homodimer. The RNAP catalytic core consists of 2 alpha, 1 beta, 1 beta' and 1 omega subunit. When a sigma factor is associated with the core the holoenzyme is formed, which can initiate transcription.

It carries out the reaction RNA(n) + a ribonucleoside 5'-triphosphate = RNA(n+1) + diphosphate. Its function is as follows. DNA-dependent RNA polymerase catalyzes the transcription of DNA into RNA using the four ribonucleoside triphosphates as substrates. The protein is DNA-directed RNA polymerase subunit alpha of Dehalococcoides mccartyi (strain ATCC BAA-2266 / KCTC 15142 / 195) (Dehalococcoides ethenogenes (strain 195)).